Here is a 319-residue protein sequence, read N- to C-terminus: Dimethyladenosine transferase (319 aa).

S-adenosyl-L-methionine-binding residues include histidine 37, leucine 39, glycine 64, glutamate 85, aspartate 113, and asparagine 128.

Belongs to the class I-like SAM-binding methyltransferase superfamily. rRNA adenine N(6)-methyltransferase family.

The enzyme catalyses adenosine(1779)/adenosine(1780) in 18S rRNA + 4 S-adenosyl-L-methionine = N(6)-dimethyladenosine(1779)/N(6)-dimethyladenosine(1780) in 18S rRNA + 4 S-adenosyl-L-homocysteine + 4 H(+). Its function is as follows. Specifically dimethylates two adjacent adenosines in the loop of a conserved hairpin near the 3'-end of 18S rRNA in the 40S particle. This Eremothecium gossypii (strain ATCC 10895 / CBS 109.51 / FGSC 9923 / NRRL Y-1056) (Yeast) protein is Dimethyladenosine transferase (DIM1).